The chain runs to 979 residues: Ubiquitin carboxyl-terminal hydrolase 37 (979 aa).

The KEN box 1 motif lies at 32 to 34 (KDN). 2 short sequence motifs (D-box) span residues 71 to 79 (RLMLTLQDN) and 96 to 105 (RLFLDAVHQN). Ser114 carries the phosphoserine modification. Disordered stretches follow at residues 116-178 (GSGS…TGGG) and 192-240 (STPL…SRKY). Polar residues predominate over residues 135–148 (RQLSYSDNQASSKR). Basic and acidic residues predominate over residues 149–159 (GSLETKDEIPF). A D-box 3 motif is present at residues 160–168 (RKVLGSPGR). Residue Ser212 is modified to Phosphoserine. A KEN box 2 motif is present at residues 222–224 (KEN). Residues 341–951 (QGFSNLGNTC…SGYIFFYMHK (611 aa)) enclose the USP domain. Catalysis depends on Cys350, which acts as the Nucleophile. Ser628 is subject to Phosphoserine; by CDK2. Ser650 and Ser652 each carry phosphoserine. Residues 704-723 (SEEEVLAAVLEISRREASPV) form the UIM 1 domain. Positions 719–795 (EASPVLSPED…TPEGSQGEVD (77 aa)) are disordered. Ser770 is subject to Phosphoserine. Basic and acidic residues predominate over residues 774 to 786 (ITKDCDENKENKT). The short motif at 782–784 (KEN) is the KEN box 3 element. UIM domains lie at 806–825 (REEQ…QEAW) and 828–847 (KEDD…FNNS). His906 (proton acceptor) is an active-site residue.

This sequence belongs to the peptidase C19 family. In terms of assembly, interacts with FZR1/CDH1. Interacts with CDT1. Post-translationally, polyubiquitinated via 'Lys-11'-linked ubiquitin by the APC(CDH1) complex during late mitosis, leading to its degradation. Able to mediate auto-deubiquitination. In terms of processing, phosphorylated at Ser-628 by CDK2 during G1/S phase but not during mitosis; phosphorylation at Ser-628 is required for deubiquitinase activity. Also polyubiquitinated during early G1 phase, without leading to degradation. Phosphorylated at Ser-114 by ATM following DNA damage, which in turn increases its deubiquitination activity towards BLM.

The protein localises to the nucleus. It localises to the chromosome. The catalysed reaction is Thiol-dependent hydrolysis of ester, thioester, amide, peptide and isopeptide bonds formed by the C-terminal Gly of ubiquitin (a 76-residue protein attached to proteins as an intracellular targeting signal).. Its function is as follows. Deubiquitinase that plays a role in different processes including cell cycle regulation, DNA replication or DNA damage response. Antagonizes the anaphase-promoting complex (APC/C) during G1/S transition by mediating deubiquitination of cyclin-A (CCNA1 and CCNA2), thereby promoting S phase entry. Specifically mediates deubiquitination of 'Lys-11'-linked polyubiquitin chains, a specific ubiquitin-linkage type mediated by the APC/C complex. Phosphorylation at Ser-628 during G1/S phase maximizes the deubiquitinase activity, leading to prevent degradation of cyclin-A (CCNA1 and CCNA2). Plays an important role in the regulation of DNA replication by stabilizing the licensing factor CDT1. Also plays an essential role beyond S-phase entry to promote the efficiency and fidelity of replication by deubiquitinating checkpoint kinase 1/CHK1, promoting its stability. Sustains the DNA damage response (DDR) by deubiquitinating and stabilizing the ATP-dependent DNA helicase BLM. Mechanistically, DNA double-strand breaks (DSB) promotes ATM-mediated phosphorylation of USP37 and enhances the binding between USP37 and BLM. Promotes cell migration by deubiquitinating and stabilizing the epithelial-mesenchymal transition (EMT)-inducing transcription factor SNAI. Plays a role in the regulation of mitotic spindle assembly and mitotic progression by associating with chromatin-associated WAPL and stabilizing it through deubiquitination. This is Ubiquitin carboxyl-terminal hydrolase 37 from Mus musculus (Mouse).